A 398-amino-acid polypeptide reads, in one-letter code: Probable L-tyrosine/L-aspartate decarboxylase (398 aa).

Lys-242 carries the N6-(pyridoxal phosphate)lysine modification.

This sequence belongs to the group II decarboxylase family. MfnA subfamily. Pyridoxal 5'-phosphate is required as a cofactor.

The catalysed reaction is L-tyrosine + H(+) = tyramine + CO2. It catalyses the reaction L-aspartate + H(+) = beta-alanine + CO2. It functions in the pathway cofactor biosynthesis; methanofuran biosynthesis. Its pathway is cofactor biosynthesis; coenzyme A biosynthesis. In terms of biological role, catalyzes the decarboxylation of L-tyrosine to produce tyramine for methanofuran biosynthesis. Can also catalyze the decarboxylation of L-aspartate to produce beta-alanine for coenzyme A (CoA) biosynthesis. The sequence is that of Probable L-tyrosine/L-aspartate decarboxylase from Methanosarcina mazei (strain ATCC BAA-159 / DSM 3647 / Goe1 / Go1 / JCM 11833 / OCM 88) (Methanosarcina frisia).